Here is a 292-residue protein sequence, read N- to C-terminus: ATP synthase gamma chain (292 aa).

This sequence belongs to the ATPase gamma chain family. As to quaternary structure, F-type ATPases have 2 components, CF(1) - the catalytic core - and CF(0) - the membrane proton channel. CF(1) has five subunits: alpha(3), beta(3), gamma(1), delta(1), epsilon(1). CF(0) has three main subunits: a, b and c.

The protein localises to the cell inner membrane. Functionally, produces ATP from ADP in the presence of a proton gradient across the membrane. The gamma chain is believed to be important in regulating ATPase activity and the flow of protons through the CF(0) complex. The chain is ATP synthase gamma chain from Magnetococcus marinus (strain ATCC BAA-1437 / JCM 17883 / MC-1).